The following is a 277-amino-acid chain: Undecaprenyl-diphosphatase (277 aa).

7 helical membrane passes run 3–23, 44–64, 82–102, 109–129, 189–209, 218–238, and 253–273; these read IALLIKAAIMGIVEGLTEFLP, AKVFDIAIQTGAIFAVILVYW, QFALNVLVAFVPAVVLGLLFG, LFTPVVVASAFIVGGFIILWA, TDFSFYLAIPTLIGAGAYSLF, ADAPMFGVGLLFSFLSAWLCI, and FAWYRIAFGIVVLATAWSGVV.

Belongs to the UppP family.

The protein resides in the cell inner membrane. The enzyme catalyses di-trans,octa-cis-undecaprenyl diphosphate + H2O = di-trans,octa-cis-undecaprenyl phosphate + phosphate + H(+). Catalyzes the dephosphorylation of undecaprenyl diphosphate (UPP). Confers resistance to bacitracin. In Polaromonas naphthalenivorans (strain CJ2), this protein is Undecaprenyl-diphosphatase.